The following is a 629-amino-acid chain: tRNA uridine 5-carboxymethylaminomethyl modification enzyme MnmG (629 aa).

FAD is bound by residues 14–19 (GAGHAG), valine 126, and serine 181. Position 273-287 (273-287 (GPRYCPSIEDKVVRF)) interacts with NAD(+). Glutamine 370 contributes to the FAD binding site.

The protein belongs to the MnmG family. As to quaternary structure, homodimer. Heterotetramer of two MnmE and two MnmG subunits. FAD is required as a cofactor.

It localises to the cytoplasm. Functionally, NAD-binding protein involved in the addition of a carboxymethylaminomethyl (cmnm) group at the wobble position (U34) of certain tRNAs, forming tRNA-cmnm(5)s(2)U34. The protein is tRNA uridine 5-carboxymethylaminomethyl modification enzyme MnmG of Bacillus cereus (strain ZK / E33L).